Here is a 947-residue protein sequence, read N- to C-terminus: Mitogen-activated protein kinase kinase kinase 14 (947 aa).

2 disordered regions span residues methionine 1–serine 37 and lysine 135–glutamine 171. Over residues lysine 135–serine 151 the composition is skewed to basic residues. A Protein kinase domain is found at alanine 400–leucine 655. The interval threonine 401 to arginine 653 is interaction with ZFP91. ATP contacts are provided by residues leucine 406–valine 414 and lysine 429. The active-site Proton acceptor is aspartate 515. Threonine 559 is modified (phosphothreonine). 2 disordered regions span residues lysine 662–proline 766 and leucine 805–serine 830. A compositionally biased stretch (basic and acidic residues) spans tryptophan 665–histidine 674. Residues leucine 713–serine 727 show a composition bias toward pro residues. Over residues glutamate 741–proline 752 the composition is skewed to low complexity. Positions serine 814–histidine 829 are enriched in polar residues.

This sequence belongs to the protein kinase superfamily. STE Ser/Thr protein kinase family. MAP kinase kinase kinase subfamily. In terms of assembly, interacts with TRAF2, TRAF5, TRAF6, IKKA and NFKB2/P100. Interacts with TRAF3 and PELI3. Interacts with NIBP; the interaction is direct. Interacts with ARRB1 and ARRB2. Interacts with GRB10. Interacts with ZFP91. Interacts with NLRP12; this interaction promotes proteasomal degradation of MAP3K14. Directly interacts with DDX3X. Interacts (via C-terminus and kinase domain) with PPPC3A (via N-terminus) and PPP3CB. Autophosphorylated. Phosphorylation at Thr-559 is required to activate its kinase activity and 'Lys-63'-linked polyubiquitination. Phosphorylated by CHUK/IKKA leading to MAP3K14 destabilization. In terms of processing, ubiquitinated. Undergoes both 'Lys-48'- and 'Lys-63'-linked polyubiquitination. 'Lys-48'-linked polyubiquitination leads to its degradation by the proteasome, while 'Lys-63'-linked polyubiquitination stabilizes and activates it. As to expression, weakly expressed in testis, small intestine, spleen, thymus, peripheral blood leukocytes, prostate, ovary and colon.

The protein resides in the cytoplasm. It carries out the reaction L-seryl-[protein] + ATP = O-phospho-L-seryl-[protein] + ADP + H(+). The catalysed reaction is L-threonyl-[protein] + ATP = O-phospho-L-threonyl-[protein] + ADP + H(+). Lymphotoxin beta-activated kinase which seems to be exclusively involved in the activation of NF-kappa-B and its transcriptional activity. Phosphorylates CHUK/IKKA, thereby promoting proteolytic processing of NFKB2/P100, which leads to NF-kappa-B activation via the non-canonical pathway. Has an essential role in the non-canonical NF-kappa-B signaling that regulates genes encoding molecules involved in B-cell survival, lymphoid organogenesis, and immune response. Could act in a receptor-selective manner. In Homo sapiens (Human), this protein is Mitogen-activated protein kinase kinase kinase 14.